A 130-amino-acid chain; its full sequence is Protein YoeA (130 aa).

The signal sequence occupies residues 1–28 (MLYNIPCRIYILSTLSLCISGIVSTATA). In terms of domain architecture, TBDR plug spans 51 to 130 (NLWESPATIQ…RCRRYSRGER (80 aa)).

It belongs to the TonB-dependent receptor family.

This is Protein YoeA (yoeA) from Escherichia coli (strain K12).